Consider the following 512-residue polypeptide: Spermatocyte protein spe-8 (512 aa).

The interval 1–85 (MRSKSSEGDL…PKPSSDNNNS (85 aa)) is disordered. Positions 15–41 (TQSREDKETTATYSEDTKPETQKERNA) are enriched in basic and acidic residues. Positions 68-78 (EAPPPPPPPKP) are enriched in pro residues. The region spanning 114-205 (FYHGFMGRNE…YEGMTLICGL (92 aa)) is the SH2 domain. A Protein kinase domain is found at 217 to 485 (VTLNKKLGEG…KEEVGFHEIE (269 aa)). Residues 223 to 231 (LGEGQFGEV) and K250 contribute to the ATP site. The active-site Proton acceptor is D344.

The protein belongs to the protein kinase superfamily. Tyr protein kinase family. Fes/fps subfamily. Expression is restricted to male germline.

The protein resides in the cell membrane. It localises to the cytoplasm. The enzyme catalyses L-tyrosyl-[protein] + ATP = O-phospho-L-tyrosyl-[protein] + ADP + H(+). In terms of biological role, probable non-receptor tyrosine-protein kinase which plays a role in spermatid activation (spermiogenesis) in hermaphrodites. This is Spermatocyte protein spe-8 from Caenorhabditis elegans.